Consider the following 178-residue polypeptide: Large ribosomal subunit protein uL6 (178 aa).

It belongs to the universal ribosomal protein uL6 family. As to quaternary structure, part of the 50S ribosomal subunit.

In terms of biological role, this protein binds to the 23S rRNA, and is important in its secondary structure. It is located near the subunit interface in the base of the L7/L12 stalk, and near the tRNA binding site of the peptidyltransferase center. This is Large ribosomal subunit protein uL6 from Streptococcus mutans serotype c (strain ATCC 700610 / UA159).